Consider the following 394-residue polypeptide: Phosphoglycerate kinase (394 aa).

Substrate contacts are provided by residues Asp21–Asn23, Arg36, His59–Arg62, Arg118, and Arg151. The residue at position 183 (Ser183) is a Phosphoserine. Residues Lys201 and Gly292 each coordinate ATP. The residue at position 299 (Thr299) is a Phosphothreonine. ATP is bound by residues Glu323 and Gly350 to Ser353.

It belongs to the phosphoglycerate kinase family. In terms of assembly, monomer.

The protein resides in the cytoplasm. It carries out the reaction (2R)-3-phosphoglycerate + ATP = (2R)-3-phospho-glyceroyl phosphate + ADP. It functions in the pathway carbohydrate degradation; glycolysis; pyruvate from D-glyceraldehyde 3-phosphate: step 2/5. The protein is Phosphoglycerate kinase (pgk) of Priestia megaterium (strain DSM 319 / IMG 1521) (Bacillus megaterium).